A 480-amino-acid polypeptide reads, in one-letter code: Protein nucleotidyltransferase YdiU (480 aa).

Residues Gly86, Gly88, Arg89, Lys109, Asp121, Gly122, Arg172, and Arg179 each coordinate ATP. The active-site Proton acceptor is the Asp248. Mg(2+) is bound by residues Asn249 and Asp258. Asp258 contributes to the ATP binding site.

It belongs to the SELO family. Mg(2+) serves as cofactor. The cofactor is Mn(2+).

It carries out the reaction L-seryl-[protein] + ATP = 3-O-(5'-adenylyl)-L-seryl-[protein] + diphosphate. The enzyme catalyses L-threonyl-[protein] + ATP = 3-O-(5'-adenylyl)-L-threonyl-[protein] + diphosphate. It catalyses the reaction L-tyrosyl-[protein] + ATP = O-(5'-adenylyl)-L-tyrosyl-[protein] + diphosphate. The catalysed reaction is L-histidyl-[protein] + UTP = N(tele)-(5'-uridylyl)-L-histidyl-[protein] + diphosphate. It carries out the reaction L-seryl-[protein] + UTP = O-(5'-uridylyl)-L-seryl-[protein] + diphosphate. The enzyme catalyses L-tyrosyl-[protein] + UTP = O-(5'-uridylyl)-L-tyrosyl-[protein] + diphosphate. Functionally, nucleotidyltransferase involved in the post-translational modification of proteins. It can catalyze the addition of adenosine monophosphate (AMP) or uridine monophosphate (UMP) to a protein, resulting in modifications known as AMPylation and UMPylation. This is Protein nucleotidyltransferase YdiU from Salmonella paratyphi C (strain RKS4594).